The chain runs to 157 residues: MARLLPALLLLLLPGNVTGNGSGNGSLSRCPPGQFRCSEPPGAHGECYPQDWLCDGHPDCDDGRDEWGCGTSATPAVPTDNGTEAPTVPAPGRALPARNHGRMWMLITAVLLCCLVAVGGIAAWGKSKAKSRSDIFSLASASKELLVPDKSQADLFS.

The N-terminal stretch at 1-19 (MARLLPALLLLLLPGNVTG) is a signal peptide. N-linked (GlcNAc...) asparagine glycans are attached at residues N20 and N24. Residues 20 to 102 (NGSGNGSLSR…RALPARNHGR (83 aa)) lie on the Extracellular side of the membrane. An LDL-receptor class A domain is found at 28–71 (SRCPPGQFRCSEPPGAHGECYPQDWLCDGHPDCDDGRDEWGCGT). 3 disulfides stabilise this stretch: C30/C47, C37/C60, and C54/C69. An N-linked (GlcNAc...) asparagine glycan is attached at N81. A helical transmembrane segment spans residues 103–125 (MWMLITAVLLCCLVAVGGIAAWG). Topologically, residues 126-157 (KSKAKSRSDIFSLASASKELLVPDKSQADLFS) are cytoplasmic.

In terms of assembly, (Microbial infection) Interacts with Rous sarcoma virus envelope protein; this interaction allows the viral attachment.

The protein localises to the membrane. In terms of biological role, responsible for susceptibility to the retrovirus subgroup A Rous sarcoma virus. The polypeptide is Subgroup A Rous sarcoma virus receptor pg950 (Coturnix japonica (Japanese quail)).